Consider the following 88-residue polypeptide: Small ribosomal subunit protein bS20 (88 aa).

Residues 1–27 (MANSKTAKKRAIQSEKRRQHNASRRSM) are disordered.

This sequence belongs to the bacterial ribosomal protein bS20 family.

Functionally, binds directly to 16S ribosomal RNA. The polypeptide is Small ribosomal subunit protein bS20 (Shewanella amazonensis (strain ATCC BAA-1098 / SB2B)).